We begin with the raw amino-acid sequence, 542 residues long: Organic anion transporter 3 (542 aa).

At 1-20 (MTFSEILDRVGSMGRFQFLH) the chain is on the cytoplasmic side. S4 carries the post-translational modification Phosphoserine. Residues 21-41 (VAILGLPILNMANHNLLQIFT) traverse the membrane as a helical segment. Over 42 to 123 (AATPVHHCRP…LVCNSNKLKE (82 aa)) the chain is Extracellular. N86 is a glycosylation site (N-linked (GlcNAc...) asparagine). The chain crosses the membrane as a helical span at residues 124–144 (MAQSIFMAGILIGGLVLGDLS). Residues 145-154 (DRFGRRPILT) are Cytoplasmic-facing. The helical transmembrane segment at 155-175 (CSYLLLAASGSGAAFSPTFPI) threads the bilayer. A topological domain (extracellular) is located at residue Y176. A helical membrane pass occupies residues 177-197 (MVFRFLCGFGISGITLSTVIL). Residues 198–212 (NVEWVPTRMRAIMST) lie on the Cytoplasmic side of the membrane. The chain crosses the membrane as a helical span at residues 213–233 (ALGYCYTFGQFILPGLAYAIP). Over 234 to 236 (QWR) the chain is Extracellular. The helical transmembrane segment at 237 to 257 (WLQLTVSIPFFIFFLSSWWTP) threads the bilayer. The Cytoplasmic segment spans residues 258-327 (ESIRWLVLSG…FRIPMLRRMT (70 aa)). The helical transmembrane segment at 328-348 (FCLSLAWFATGFAYYSLAMGV) threads the bilayer. Residues 349 to 354 (EEFGVN) lie on the Extracellular side of the membrane. A helical membrane pass occupies residues 355–375 (LYILQIIFGGVDVPAKFITIL). Over 376 to 386 (SLSYLGRHTTQ) the chain is Cytoplasmic. Residues 387–407 (AAALLLAGGAILALTFVPLDL) traverse the membrane as a helical segment. Residues 408 to 471 (QTVRTVLAVF…LVKITGEVQP (64 aa)) are Extracellular-facing. Residues 472-492 (FIPNIIYGITALLGGSAAFFL) form a helical membrane-spanning segment. Over 493–542 (PETLNQPLPETIEDLENWSLRAKKPKQEPEVEKASQRIPLQPHGPGLGSS) the chain is Cytoplasmic. Positions 515-542 (KKPKQEPEVEKASQRIPLQPHGPGLGSS) are disordered. Basic and acidic residues predominate over residues 517 to 527 (PKQEPEVEKAS).

It belongs to the major facilitator (TC 2.A.1) superfamily. Organic cation transporter (TC 2.A.1.19) family.

Its subcellular location is the basolateral cell membrane. It catalyses the reaction estrone 3-sulfate(out) + glutarate(in) = estrone 3-sulfate(in) + glutarate(out). It carries out the reaction estrone 3-sulfate(in) + 2-oxoglutarate(out) = estrone 3-sulfate(out) + 2-oxoglutarate(in). The catalysed reaction is glutarate(in) + 2-oxoglutarate(out) = glutarate(out) + 2-oxoglutarate(in). The enzyme catalyses urate(in) + 2-oxoglutarate(out) = urate(out) + 2-oxoglutarate(in). It catalyses the reaction taurocholate(out) + glutarate(in) = taurocholate(in) + glutarate(out). It carries out the reaction dehydroepiandrosterone 3-sulfate(out) + glutarate(in) = dehydroepiandrosterone 3-sulfate(in) + glutarate(out). The catalysed reaction is prostaglandin F2alpha(out) + glutarate(in) = prostaglandin F2alpha(in) + glutarate(out). The enzyme catalyses prostaglandin F2alpha(out) + 2-oxoglutarate(in) = prostaglandin F2alpha(in) + 2-oxoglutarate(out). It catalyses the reaction (R)-carnitine(out) + 2-oxoglutarate(in) = (R)-carnitine(in) + 2-oxoglutarate(out). It carries out the reaction glutarate(in) + (R)-carnitine(out) = glutarate(out) + (R)-carnitine(in). The catalysed reaction is prostaglandin E2(out) + 2-oxoglutarate(in) = prostaglandin E2(in) + 2-oxoglutarate(out). The enzyme catalyses prostaglandin E2(out) + glutarate(in) = prostaglandin E2(in) + glutarate(out). It catalyses the reaction urate(in) + glutarate(out) = urate(out) + glutarate(in). It carries out the reaction taurocholate(out) + 2-oxoglutarate(in) = taurocholate(in) + 2-oxoglutarate(out). The catalysed reaction is dehydroepiandrosterone 3-sulfate(out) + 2-oxoglutarate(in) = dehydroepiandrosterone 3-sulfate(in) + 2-oxoglutarate(out). The enzyme catalyses kynurenate(out) + a dicarboxylate(in) = kynurenate(in) + a dicarboxylate(out). It catalyses the reaction (indol-3-yl)acetate(out) + a dicarboxylate(in) = (indol-3-yl)acetate(in) + a dicarboxylate(out). It carries out the reaction indoxyl sulfate(out) + a dicarboxylate(in) = indoxyl sulfate(in) + a dicarboxylate(out). The catalysed reaction is N-benzoylglycine(out) + a dicarboxylate(in) = N-benzoylglycine(in) + a dicarboxylate(out). The enzyme catalyses 3-carboxy-4-methyl-5-propyl-2-furanpropanoate(out) + a dicarboxylate(in) = 3-carboxy-4-methyl-5-propyl-2-furanpropanoate(in) + a dicarboxylate(out). It catalyses the reaction (6R)-L-erythro-5,6,7,8-tetrahydrobiopterin(out) + a dicarboxylate(in) = (6R)-L-erythro-5,6,7,8-tetrahydrobiopterin(in) + a dicarboxylate(out). It carries out the reaction L-erythro-7,8-dihydrobiopterin(out) + a dicarboxylate(in) = L-erythro-7,8-dihydrobiopterin(in) + a dicarboxylate(out). The catalysed reaction is L-sepiapterin(out) + a dicarboxylate(in) = L-sepiapterin(in) + a dicarboxylate(out). Its function is as follows. Functions as an organic anion/dicarboxylate exchanger that couples organic anion uptake indirectly to the sodium gradient. Transports organic anions such as estrone 3-sulfate (E1S) and urate in exchange for dicarboxylates such as glutarate or ketoglutarate (2-oxoglutarate). Plays an important role in the excretion of endogenous and exogenous organic anions, especially from the kidney and the brain. E1S transport is pH- and chloride-dependent and may also involve E1S/cGMP exchange. Responsible for the transport of prostaglandin E2 (PGE2) and prostaglandin F2(alpha) (PGF2(alpha)) in the basolateral side of the renal tubule. Involved in the transport of neuroactive tryptophan metabolites kynurenate and xanthurenate. Functions as a biopterin transporters involved in the uptake and the secretion of coenzymes tetrahydrobiopterin (BH4), dihydrobiopterin (BH2) and sepiapterin to urine, thereby determining baseline levels of blood biopterins. May be involved in the basolateral transport of steviol, a metabolite of the popular sugar substitute stevioside. May participate in the detoxification/ renal excretion of drugs and xenobiotics, such as the histamine H(2)-receptor antagonists fexofenadine and cimetidine, the antibiotic benzylpenicillin (PCG), the anionic herbicide 2,4-dichloro-phenoxyacetate (2,4-D), the diagnostic agent p-aminohippurate (PAH), the antiviral acyclovir (ACV), and the mycotoxin ochratoxin (OTA), by transporting these exogenous organic anions across the cell membrane in exchange for dicarboxylates such as 2-oxoglutarate. Contributes to the renal uptake of potent uremic toxins (indoxyl sulfate (IS), indole acetate (IA), hippurate/N-benzoylglycine (HA) and 3-carboxy-4-methyl-5-propyl-2-furanpropionate (CMPF)), pravastatin, PCG, E1S and dehydroepiandrosterone sulfate (DHEAS), and is partly involved in the renal uptake of temocaprilat (an angiotensin-converting enzyme (ACE) inhibitor). May contribute to the release of cortisol in the adrenals. Involved in one of the detoxification systems on the choroid plexus (CP), removes substrates such as E1S or taurocholate (TC), PCG, 2,4-D and PAH, from the cerebrospinal fluid (CSF) to the blood for eventual excretion in urine and bile. Also contributes to the uptake of several other organic compounds such as the prostanoids prostaglandin E(2) and prostaglandin F(2-alpha), L-carnitine, and the therapeutic drugs allopurinol, 6-mercaptopurine (6-MP) and 5-fluorouracil (5-FU). Mediates the transport of PAH, PCG, and the statins pravastatin and pitavastatin, from the cerebrum into the blood circulation across the blood-brain barrier (BBB). In summary, plays a role in the efflux of drugs and xenobiotics, helping reduce their undesired toxicological effects on the body. This Pongo abelii (Sumatran orangutan) protein is Organic anion transporter 3 (SLC22A8).